The following is a 271-amino-acid chain: Formamidopyrimidine-DNA glycosylase (271 aa).

The active-site Schiff-base intermediate with DNA is the Pro-2. The active-site Proton donor is the Glu-3. Lys-58 acts as the Proton donor; for beta-elimination activity in catalysis. DNA is bound by residues His-92, Arg-111, and Arg-152. An FPG-type zinc finger spans residues 237-271 (FVYGREGEACKQCGRVLKHATIGQRATVWCGSCQR). Arg-261 (proton donor; for delta-elimination activity) is an active-site residue.

The protein belongs to the FPG family. Monomer. Zn(2+) serves as cofactor.

The catalysed reaction is Hydrolysis of DNA containing ring-opened 7-methylguanine residues, releasing 2,6-diamino-4-hydroxy-5-(N-methyl)formamidopyrimidine.. The enzyme catalyses 2'-deoxyribonucleotide-(2'-deoxyribose 5'-phosphate)-2'-deoxyribonucleotide-DNA = a 3'-end 2'-deoxyribonucleotide-(2,3-dehydro-2,3-deoxyribose 5'-phosphate)-DNA + a 5'-end 5'-phospho-2'-deoxyribonucleoside-DNA + H(+). Involved in base excision repair of DNA damaged by oxidation or by mutagenic agents. Acts as a DNA glycosylase that recognizes and removes damaged bases. Has a preference for oxidized purines, such as 7,8-dihydro-8-oxoguanine (8-oxoG). Has AP (apurinic/apyrimidinic) lyase activity and introduces nicks in the DNA strand. Cleaves the DNA backbone by beta-delta elimination to generate a single-strand break at the site of the removed base with both 3'- and 5'-phosphates. The polypeptide is Formamidopyrimidine-DNA glycosylase (Xanthomonas axonopodis pv. citri (strain 306)).